Consider the following 124-residue polypeptide: Hydrogenase maturation factor HypA (124 aa).

His-2 lines the Ni(2+) pocket. Residues Cys-78, Cys-81, Cys-97, and Cys-100 each coordinate Zn(2+).

The protein belongs to the HypA/HybF family.

Its function is as follows. Involved in the maturation of [NiFe] hydrogenases. Required for nickel insertion into the metal center of the hydrogenase. In Methanococcus vannielii (strain ATCC 35089 / DSM 1224 / JCM 13029 / OCM 148 / SB), this protein is Hydrogenase maturation factor HypA.